Reading from the N-terminus, the 132-residue chain is UPF0299 membrane protein YohJ (132 aa).

4 helical membrane-spanning segments follow: residues 7 to 27 (IIWQYIRAFVLIYACLYAGIF), 31 to 51 (LLPITIPGSIIGMLILFVLLA), 63 to 83 (GCYVLIRYMALLFVPIGVGVM), and 93 to 113 (FGPVVVSCAISTLVVFVVVSW).

Belongs to the UPF0299 family.

It localises to the cell inner membrane. This chain is UPF0299 membrane protein YohJ, found in Salmonella agona (strain SL483).